Consider the following 245-residue polypeptide: UPF0246 protein Ldb2075 (245 aa).

This sequence belongs to the UPF0246 family.

This chain is UPF0246 protein Ldb2075, found in Lactobacillus delbrueckii subsp. bulgaricus (strain ATCC 11842 / DSM 20081 / BCRC 10696 / JCM 1002 / NBRC 13953 / NCIMB 11778 / NCTC 12712 / WDCM 00102 / Lb 14).